We begin with the raw amino-acid sequence, 321 residues long: Malate dehydrogenase (321 aa).

NAD(+) contacts are provided by residues 11–16 (GSGNIG) and Asp-35. The substrate site is built by Arg-84 and Arg-90. NAD(+)-binding positions include Asn-97 and 120 to 122 (ITN). Residues Asn-122 and Arg-153 each contribute to the substrate site. The active-site Proton acceptor is the His-177.

Belongs to the LDH/MDH superfamily. MDH type 3 family.

It carries out the reaction (S)-malate + NAD(+) = oxaloacetate + NADH + H(+). In terms of biological role, catalyzes the reversible oxidation of malate to oxaloacetate. The sequence is that of Malate dehydrogenase from Rickettsia peacockii (strain Rustic).